Here is a 302-residue protein sequence, read N- to C-terminus: Lysosomal thioesterase PPT2 (302 aa).

The signal sequence occupies residues 1–27; the sequence is MLGLCGQRLPAAWVLLLLPFLPLLLLA. Asn-60 is a glycosylation site (N-linked (GlcNAc...) asparagine). Cystine bridges form between Cys-109–Cys-117 and Cys-165–Cys-176. The Nucleophile role is filled by Ser-111. N-linked (GlcNAc...) asparagine glycosylation is found at Asn-190 and Asn-206. Asp-228 is a catalytic residue. Residue Asn-245 is glycosylated (N-linked (GlcNAc...) asparagine). Residues Cys-276 and Cys-296 are joined by a disulfide bond. His-283 is a catalytic residue. Asn-289 carries an N-linked (GlcNAc...) asparagine glycan.

This sequence belongs to the palmitoyl-protein thioesterase family. As to expression, broadly expressed, with highest levels in skeletal muscle.

The protein resides in the lysosome. The catalysed reaction is hexadecanoyl-CoA + H2O = hexadecanoate + CoA + H(+). The enzyme catalyses S-hexadecanoyl-N-acetylcysteamine + H2O = N-acetylcysteamine + hexadecanoate + H(+). Functionally, catalyzes the cleavage of thioester bonds from S-palmitoyl-CoA or S-palmitoyl-N-acetylcysteamine (unbranched structures) but does not have activity against palmitoylcysteine or palmitoylated proteins, branched structures or bulky head groups. Conversely, hydrolyzes both long and short chain fatty acyl-CoA substrate. Its function is as follows. Catalytically inactive due to lack of active site His-283. The protein is Lysosomal thioesterase PPT2 of Homo sapiens (Human).